Reading from the N-terminus, the 92-residue chain is C-C motif chemokine 4 (92 aa).

Positions 1 to 23 are cleaved as a signal peptide; the sequence is MKLCVTVLSLLVLMAAFCSPALS. 2 disulfide bridges follow: C34–C58 and C35–C74.

It belongs to the intercrine beta (chemokine CC) family. As to quaternary structure, homodimer. Interacts with CCR5.

It localises to the secreted. Monokine with inflammatory and chemokinetic properties. The chain is C-C motif chemokine 4 (CCL4) from Bos taurus (Bovine).